We begin with the raw amino-acid sequence, 542 residues long: Thermosome subunit (542 aa).

It belongs to the TCP-1 chaperonin family. Forms an oligomeric complex of eight-membered rings.

In terms of biological role, molecular chaperone; binds unfolded polypeptides in vitro, and has a weak ATPase activity. The chain is Thermosome subunit (ths) from Methanocaldococcus jannaschii (strain ATCC 43067 / DSM 2661 / JAL-1 / JCM 10045 / NBRC 100440) (Methanococcus jannaschii).